Here is a 308-residue protein sequence, read N- to C-terminus: Zinc-binding protein TroA (308 aa).

An N-terminal signal peptide occupies residues 1–22 (MIRERICACVLALGMLTGFTHA). Zn(2+)-binding residues include H68, H133, H199, and D279.

It belongs to the bacterial solute-binding protein 9 family. Monomer.

It is found in the periplasm. Functionally, part of the ATP-binding cassette (ABC) transport system TroABC involved in zinc import. Binds zinc with high affinity and specificity and delivers it to the membrane permease for translocation into the cytoplasm. The chain is Zinc-binding protein TroA (troA) from Treponema pallidum (strain Nichols).